A 108-amino-acid polypeptide reads, in one-letter code: MMKGGMAGLMKQAQQMQEKMAKMQEELANAEVTGQSGAGLVSVVMTGRHDVKRINLDDSLMQEDKEVLEDLIAAAVNDAVRKIEQASQDKTASMTAGMQLPPGMKLPF.

The span at 85 to 96 shows a compositional bias: polar residues; sequence QASQDKTASMTA. A disordered region spans residues 85-108; it reads QASQDKTASMTAGMQLPPGMKLPF.

Belongs to the YbaB/EbfC family. Homodimer.

It is found in the cytoplasm. The protein localises to the nucleoid. In terms of biological role, binds to DNA and alters its conformation. May be involved in regulation of gene expression, nucleoid organization and DNA protection. This is Nucleoid-associated protein PSPTO_3645 from Pseudomonas syringae pv. tomato (strain ATCC BAA-871 / DC3000).